A 669-amino-acid chain; its full sequence is Leucine zipper putative tumor suppressor 2 (669 aa).

Low complexity predominate over residues 1–25 (MAIVQTLPVPLEPAPEAATAPQAPV). 4 disordered regions span residues 1–56 (MAIV…PTFF), 92–131 (NEDFRTESPPSPSSDVEDAREQRAHNAHLRGPPPKLIPVS), 150–201 (PVLP…AADK), and 215–323 (GTLS…SDEA). Positions 1–332 (MAIVQTLPVP…ALLHCVLEGK (332 aa)) are required for centrosomal localization. Over residues 172–181 (LSGSQGSLTQ) the composition is skewed to polar residues. Low complexity predominate over residues 187–199 (ASSSSSSSSSSAA). Positions 215–233 (GTLSDSGRNSLSSLPTYST) are enriched in polar residues. Low complexity-rich tracts occupy residues 241–251 (SSPGGHLPSHG) and 267–283 (GPSHSDSGRSSSSKSTG). Position 249 is a phosphoserine (serine 249). Gly residues predominate over residues 284 to 295 (SLGGRVAGGLLG). Serine 296 carries the phosphoserine modification. Residues 298-308 (TRASPDSSSCG) are compositionally biased toward polar residues. Over residues 311-320 (SPPPPPPPPS) the composition is skewed to pro residues. Positions 328-649 (VLEGKLRDRE…LELEARELAD (322 aa)) form a coiled coil. The interval 447 to 669 (SGEISLLKQQ…CLEEITATEI (223 aa)) is sufficient for interaction with CTNNB1. The segment at 450–669 (ISLLKQQLKE…CLEEITATEI (220 aa)) is sufficient for interaction with KATNB1 and for inhibition of katanin-mediated microtubule severing. Serine 570 carries the post-translational modification Phosphoserine. The short motif at 631–640 (LEQELQQLSL) is the Nuclear export signal element.

This sequence belongs to the LZTS2 family. In terms of assembly, interacts with KATNB1. Also interacts with CTNNB1, gamma-tubulin and KIF23. As to expression, highly expressed in prostate and testis, and at slightly lower levels in spleen, thymus, uterus, small intestine and colon.

Its subcellular location is the cytoplasm. The protein resides in the cytoskeleton. It localises to the microtubule organizing center. It is found in the centrosome. Negative regulator of katanin-mediated microtubule severing and release from the centrosome. Required for central spindle formation and the completion of cytokinesis. May negatively regulate axonal outgrowth by preventing the formation of microtubule bundles that are necessary for transport within the elongating axon. Negative regulator of the Wnt signaling pathway. Represses beta-catenin-mediated transcriptional activation by promoting the nuclear exclusion of beta-catenin. In Homo sapiens (Human), this protein is Leucine zipper putative tumor suppressor 2.